Consider the following 303-residue polypeptide: D-alanine--D-alanine ligase (303 aa).

The ATP-grasp domain maps to 104–300 (KLMWQAVGLP…FEKLVERVLE (197 aa)). Residue 132–187 (IAKLGLPVFVKPSSEGSSVGVTKVKTVEQLLPAVEEALKFDSIVLVEAFLAGKEYS) coordinates ATP. Positions 254, 267, and 269 each coordinate Mg(2+).

The protein belongs to the D-alanine--D-alanine ligase family. Requires Mg(2+) as cofactor. The cofactor is Mn(2+).

The protein resides in the cytoplasm. It carries out the reaction 2 D-alanine + ATP = D-alanyl-D-alanine + ADP + phosphate + H(+). The protein operates within cell wall biogenesis; peptidoglycan biosynthesis. Functionally, cell wall formation. The chain is D-alanine--D-alanine ligase from Actinobacillus pleuropneumoniae serotype 5b (strain L20).